We begin with the raw amino-acid sequence, 1064 residues long: Isoleucine--tRNA ligase, cytoplasmic (1064 aa).

Residues 42–52 (PFATGRPHHGH) carry the 'HIGH' region motif. Positions 597 to 601 (KMSKR) match the 'KMSKS' region motif. Lys-600 lines the ATP pocket.

This sequence belongs to the class-I aminoacyl-tRNA synthetase family.

The protein resides in the cytoplasm. The enzyme catalyses tRNA(Ile) + L-isoleucine + ATP = L-isoleucyl-tRNA(Ile) + AMP + diphosphate. The polypeptide is Isoleucine--tRNA ligase, cytoplasmic (irs1) (Schizosaccharomyces pombe (strain 972 / ATCC 24843) (Fission yeast)).